Consider the following 142-residue polypeptide: Hemoglobin subunit alpha (142 aa).

Residues 2–142 (VLSPADKTNV…VSTVLTSKYR (141 aa)) form the Globin domain. Ser-4 is subject to Phosphoserine. Lys-8 carries the N6-succinyllysine modification. Thr-9 bears the Phosphothreonine mark. Lys-12 carries the post-translational modification N6-succinyllysine. Lys-17 carries the N6-acetyllysine; alternate modification. Lys-17 carries the N6-succinyllysine; alternate modification. A Phosphotyrosine modification is found at Tyr-25. A Phosphoserine modification is found at Ser-36. The residue at position 41 (Lys-41) is an N6-succinyllysine. Phosphoserine is present on Ser-50. Position 59 (His-59) interacts with O2. His-88 serves as a coordination point for heme b. The residue at position 103 (Ser-103) is a Phosphoserine. Thr-109 bears the Phosphothreonine mark. Position 125 is a phosphoserine (Ser-125). Thr-135 and Thr-138 each carry phosphothreonine. A Phosphoserine modification is found at Ser-139.

This sequence belongs to the globin family. Heterotetramer of two alpha chains and two beta chains. Red blood cells.

Involved in oxygen transport from the lung to the various peripheral tissues. Functionally, hemopressin acts as an antagonist peptide of the cannabinoid receptor CNR1. Hemopressin-binding efficiently blocks cannabinoid receptor CNR1 and subsequent signaling. This chain is Hemoglobin subunit alpha (HBA), found in Ailurus fulgens (Himalayan red panda).